The following is a 463-amino-acid chain: MQLCIISLWFLAAFIVNADNVQFEDYESNFFFKEHLGTLSPYHEPYFDGLDSAFPETCEIQQVHLLQRHGSRNPTGDVTATDVYSSQYLNNFQEKLLNGSIPVNFSYPENPLCFIKQWTPVIDAENADQLSSRGRLELFDLGRQLYQRYYKLFDSYVYDINTAEQERVVESAKWFTYGLFGDKMYEKTNFILISEGKAAGANSLSMYNACPVFKDNNFHKNATDAAHAVWRNIFIEPIVNRLAKYFDSSYKLTINDVRSLFYICEYEIAIKDHSDFCSIFTPSEFLNFEYDSDLDQAYGGGPVSEWASTLGGAYINNLADSLRNVTNPDFDRKVFLAFTHDSNIIPVEAALGFFPDITPQNPLPTDKNIYTYSQKTSSFVPFAGNLITELFFCSDSKYYVRHLVNQQVYPLIDCGYGPSGTSDGLCELQAYLNSPIRANSTSNGISIFNTECQARPTNVTIYF.

Positions 1–18 (MQLCIISLWFLAAFIVNA) are cleaved as a signal peptide. The Nucleophile role is filled by histidine 69. 4 N-linked (GlcNAc...) asparagine glycosylation sites follow: asparagine 98, asparagine 104, asparagine 221, and asparagine 324. Aspartate 341 serves as the catalytic Proton donor. N-linked (GlcNAc...) asparagine glycans are attached at residues asparagine 439 and asparagine 458.

It belongs to the histidine acid phosphatase family.

It is found in the secreted. The protein resides in the cell wall. It carries out the reaction a phosphate monoester + H2O = an alcohol + phosphate. In terms of biological role, may dephosphorylate thiamine phosphates. The protein is Thiamine-repressible acid phosphatase SPBC21H7.03c of Schizosaccharomyces pombe (strain 972 / ATCC 24843) (Fission yeast).